A 569-amino-acid polypeptide reads, in one-letter code: Arginine--tRNA ligase (569 aa).

The 'HIGH' region signature appears at 128 to 138 (ANPTGPLHVGH).

It belongs to the class-I aminoacyl-tRNA synthetase family. In terms of assembly, monomer.

Its subcellular location is the cytoplasm. It carries out the reaction tRNA(Arg) + L-arginine + ATP = L-arginyl-tRNA(Arg) + AMP + diphosphate. The chain is Arginine--tRNA ligase from Paracidovorax citrulli (strain AAC00-1) (Acidovorax citrulli).